The chain runs to 997 residues: Chromosomal passenger complex protein bir1 (997 aa).

BIR repeat units lie at residues 25 to 99 (RLDT…PWAY) and 120 to 194 (REQT…VFFT). 4 residues coordinate Zn(2+): Cys-163, Cys-166, His-183, and Cys-190. Disordered stretches follow at residues 217 to 329 (EDLT…FSKG), 370 to 527 (TVSD…ENDE), 682 to 701 (TRDVSSPVSDEKSENVNHEE), 755 to 782 (SPKLQSKNNQTVEAVNTETSDKLQEKEA), and 817 to 838 (RTSVQNGTRSVSKNTPEKETKV). Residues 240 to 252 (TLNFSPSRKNNLN) are compositionally biased toward polar residues. Over residues 288 to 299 (PRRKNKSPKKSK) the composition is skewed to basic residues. A compositionally biased stretch (acidic residues) spans 311–320 (SDEDEDDDDL). Residues 370–392 (TVSDITGHQSVTDESDEQNNCMS) show a composition bias toward polar residues. Over residues 408 to 423 (SVVSKSKEISSSVSSV) the composition is skewed to low complexity. Residues 426–451 (EQNHTEKQVAIETPEQQKVEKEDEHL) are compositionally biased toward basic and acidic residues. 2 stretches are compositionally biased toward polar residues: residues 463–476 (KQPISSKPSTSSPD) and 485–512 (RVSSSSFRDKILQTNFSPRSTIDSFSNI). Polar residues predominate over residues 756 to 772 (PKLQSKNNQTVEAVNTE). The segment covering 773–782 (TSDKLQEKEA) has biased composition (basic and acidic residues). The segment covering 817 to 830 (RTSVQNGTRSVSKN) has biased composition (polar residues).

As to quaternary structure, component of the CPC complex at least composed of ark1, bir1 and pic1. Interacts with the mitotic checkpoint complex (MCC) subunit mad3. Phosphorylated by ark1.

The protein localises to the nucleus. Its subcellular location is the cytoplasm. The protein resides in the cytoskeleton. It localises to the spindle. It is found in the chromosome. The protein localises to the centromere. Its function is as follows. Component of the chromosomal passenger complex (CPC), a complex that acts as a key regulator of chromosome segregation and cytokinesis. Has a role in chromosome segregation by recruiting condensin and ark1 kinase to appropriate sites as the cell progresses through mitosis. Ark1 activity depends upon bir1 function and phosphorylation. Ark1 with bir1 function is required for full-scale association with kinetochores and formation of a complex with mad3. This Schizosaccharomyces pombe (strain 972 / ATCC 24843) (Fission yeast) protein is Chromosomal passenger complex protein bir1 (bir1).